The following is a 215-amino-acid chain: Cytochrome b6 (215 aa).

Residues 32–52 (IFYCLGGITLVCFLIQFATGF) form a helical membrane-spanning segment. Cys35 provides a ligand contact to heme c. Heme b contacts are provided by His86 and His100. The next 3 membrane-spanning stretches (helical) occupy residues 90-110 (ASMM…TGGF), 116-136 (LTWV…VTGY), and 186-206 (LHTF…FLMI). Residues His187 and His202 each coordinate heme b.

It belongs to the cytochrome b family. PetB subfamily. As to quaternary structure, the 4 large subunits of the cytochrome b6-f complex are cytochrome b6, subunit IV (17 kDa polypeptide, PetD), cytochrome f and the Rieske protein, while the 4 small subunits are PetG, PetL, PetM and PetN. The complex functions as a dimer. The cofactor is heme b. It depends on heme c as a cofactor.

The protein localises to the cellular thylakoid membrane. Functionally, component of the cytochrome b6-f complex, which mediates electron transfer between photosystem II (PSII) and photosystem I (PSI), cyclic electron flow around PSI, and state transitions. In Synechococcus sp. (strain JA-3-3Ab) (Cyanobacteria bacterium Yellowstone A-Prime), this protein is Cytochrome b6.